Reading from the N-terminus, the 497-residue chain is NADH-quinone oxidoreductase subunit N (497 aa).

The next 13 helical transmembrane spans lie at 12 to 32, 40 to 60, 80 to 100, 116 to 136, 166 to 186, 208 to 228, 240 to 260, 284 to 304, 316 to 336, 341 to 361, 383 to 403, 430 to 450, and 457 to 477; these read MAPE…DLAL, PLAW…AAMI, AFKF…AEWA, LFAL…TLFV, VING…VFGL, LALA…TVPF, PVPA…ALLL, MQPI…VVAL, SGIA…WAMI, MYLL…AHIV, AAAL…AGFI, TVIS…RPTF, and LPAG…AIGW.

Belongs to the complex I subunit 2 family. As to quaternary structure, NDH-1 is composed of 14 different subunits. Subunits NuoA, H, J, K, L, M, N constitute the membrane sector of the complex.

It is found in the cell membrane. It carries out the reaction a quinone + NADH + 5 H(+)(in) = a quinol + NAD(+) + 4 H(+)(out). Functionally, NDH-1 shuttles electrons from NADH, via FMN and iron-sulfur (Fe-S) centers, to quinones in the respiratory chain. The immediate electron acceptor for the enzyme in this species is believed to be a menaquinone. Couples the redox reaction to proton translocation (for every two electrons transferred, four hydrogen ions are translocated across the cytoplasmic membrane), and thus conserves the redox energy in a proton gradient. This chain is NADH-quinone oxidoreductase subunit N, found in Geobacillus kaustophilus (strain HTA426).